The sequence spans 204 residues: Nascent polypeptide-associated complex subunit alpha (204 aa).

The span at 1 to 19 (MADPRVEELPDEEVPKTNV) shows a compositional bias: basic and acidic residues. 2 disordered regions span residues 1-48 (MADP…HSRN) and 119-167 (LAAA…GLEA). Positions 22–32 (AGSDSESEAGE) are enriched in acidic residues. Residues 46-111 (SRNEKKARKA…AKIEDLNSQA (66 aa)) form the NAC-A/B domain. The segment covering 119–128 (LAAAEAAAGE) has biased composition (low complexity). Residues 129–151 (HAGHDHDHDHGKGKAPETEAKKE) show a composition bias toward basic and acidic residues. Acidic residues predominate over residues 152–164 (EEEDDGEEVDETG). The UBA domain occupies 165–204 (LEAKDIELVMAQANVSRKKAVKALRENDNDIVNSIMALSI).

Belongs to the NAC-alpha family. As to quaternary structure, part of the nascent polypeptide-associated complex (NAC), consisting of egd2 and egd1. NAC associates with ribosomes via egd1.

The protein resides in the cytoplasm. It is found in the nucleus. In terms of biological role, component of the nascent polypeptide-associated complex (NAC), a dynamic component of the ribosomal exit tunnel, protecting the emerging polypeptides from interaction with other cytoplasmic proteins to ensure appropriate nascent protein targeting. The NAC complex also promotes mitochondrial protein import by enhancing productive ribosome interactions with the outer mitochondrial membrane and blocks the inappropriate interaction of ribosomes translating non-secretory nascent polypeptides with translocation sites in the membrane of the endoplasmic reticulum. Egd2 may also be involved in transcription regulation. This chain is Nascent polypeptide-associated complex subunit alpha (egd2), found in Aspergillus clavatus (strain ATCC 1007 / CBS 513.65 / DSM 816 / NCTC 3887 / NRRL 1 / QM 1276 / 107).